A 257-amino-acid polypeptide reads, in one-letter code: 5-oxoprolinase subunit A (257 aa).

This sequence belongs to the LamB/PxpA family. Forms a complex composed of PxpA, PxpB and PxpC.

The enzyme catalyses 5-oxo-L-proline + ATP + 2 H2O = L-glutamate + ADP + phosphate + H(+). Catalyzes the cleavage of 5-oxoproline to form L-glutamate coupled to the hydrolysis of ATP to ADP and inorganic phosphate. The chain is 5-oxoprolinase subunit A from Fusobacterium nucleatum subsp. nucleatum (strain ATCC 25586 / DSM 15643 / BCRC 10681 / CIP 101130 / JCM 8532 / KCTC 2640 / LMG 13131 / VPI 4355).